Reading from the N-terminus, the 413-residue chain is Serine hydroxymethyltransferase (413 aa).

(6S)-5,6,7,8-tetrahydrofolate-binding positions include L117 and 121-123 (GHL). K226 is subject to N6-(pyridoxal phosphate)lysine. Position 349-351 (349-351 (SPF)) interacts with (6S)-5,6,7,8-tetrahydrofolate.

This sequence belongs to the SHMT family. In terms of assembly, homodimer. Pyridoxal 5'-phosphate serves as cofactor.

The protein localises to the cytoplasm. It catalyses the reaction (6R)-5,10-methylene-5,6,7,8-tetrahydrofolate + glycine + H2O = (6S)-5,6,7,8-tetrahydrofolate + L-serine. Its pathway is one-carbon metabolism; tetrahydrofolate interconversion. The protein operates within amino-acid biosynthesis; glycine biosynthesis; glycine from L-serine: step 1/1. In terms of biological role, catalyzes the reversible interconversion of serine and glycine with tetrahydrofolate (THF) serving as the one-carbon carrier. This reaction serves as the major source of one-carbon groups required for the biosynthesis of purines, thymidylate, methionine, and other important biomolecules. Also exhibits THF-independent aldolase activity toward beta-hydroxyamino acids, producing glycine and aldehydes, via a retro-aldol mechanism. The protein is Serine hydroxymethyltransferase of Listeria welshimeri serovar 6b (strain ATCC 35897 / DSM 20650 / CCUG 15529 / CIP 8149 / NCTC 11857 / SLCC 5334 / V8).